A 428-amino-acid polypeptide reads, in one-letter code: ASTRA-associated protein 1 (428 aa).

WD repeat units lie at residues 15 to 52, 55 to 93, 122 to 163, 171 to 209, 217 to 259, 323 to 362, and 364 to 418; these read GHTH…PLAI, AHHE…QGKS, VNSL…VVWN, GIKT…RYTP, SHVQ…EEME, VRHS…KVSV, and HERE…EKTL. The segment at 250-295 is disordered; sequence DQVVPEEEMEEPEPAKNSERPPSPKIVEVEDSPELEPPKNVVRGFD.

Belongs to the WD repeat ASA1 family. Component of the ASTRA chromatin remodeling machinery complex.

It localises to the nucleus. Component of the ASTRA complex involved in chromatin remodeling. This chain is ASTRA-associated protein 1 (ASA1), found in Yarrowia lipolytica (strain CLIB 122 / E 150) (Yeast).